We begin with the raw amino-acid sequence, 215 residues long: Orotate phosphoribosyltransferase (215 aa).

Residue Lys26 participates in 5-phospho-alpha-D-ribose 1-diphosphate binding. 34–35 is a binding site for orotate; the sequence is FF. 5-phospho-alpha-D-ribose 1-diphosphate-binding positions include 72 to 73, Arg99, Lys100, Lys103, His105, and 124 to 132; these read YK and DDVITAGTA. Positions 128 and 156 each coordinate orotate.

The protein belongs to the purine/pyrimidine phosphoribosyltransferase family. PyrE subfamily. Homodimer. Requires Mg(2+) as cofactor.

The enzyme catalyses orotidine 5'-phosphate + diphosphate = orotate + 5-phospho-alpha-D-ribose 1-diphosphate. It functions in the pathway pyrimidine metabolism; UMP biosynthesis via de novo pathway; UMP from orotate: step 1/2. In terms of biological role, catalyzes the transfer of a ribosyl phosphate group from 5-phosphoribose 1-diphosphate to orotate, leading to the formation of orotidine monophosphate (OMP). This is Orotate phosphoribosyltransferase from Cellvibrio japonicus (strain Ueda107) (Pseudomonas fluorescens subsp. cellulosa).